A 497-amino-acid chain; its full sequence is MPQAPMPEFSSSVKLKYVKLGYQYLVNHFLSFLLIPIMAIVAVELLRMGPEEILNVWNSLQFDLVQVLCSSFFVIFISTVYFMSKPRTIYLVDYSCYKPPVTCRVPFATFMEHSRLILKDKPKSVEFQMRILERSGLGEETCLPPAIHYIPPTPTMDAARSEAQMVIFEAMDDLFKKTGLKPKDVDILIVNCSLFSPTPSLSAMVINKYKLRSNIKSFNLSGMGCSAGLISVDLARDLLQVHPNSNAIIVSTEIITPNYYQGNERAMLLPNCLFRMGAAAIHMSNRRSDRWRAKYKLSHLVRTHRGADDKSFYCVYEQEDKEGHVGINLSKDLMAIAGEALKANITTIGPLVLPASEQLLFLTSLIGRKIFNPKWKPYIPDFKLAFEHFCIHAGGRAVIDELQKNLQLSGEHVEASRMTLHRFGNTSSSSLWYELSYIESKGRMRRGDRVWQIAFGSGFKCNSAVWKCNRTIKTPKDGPWSDCIDRYPVFIPEVVKL.

The next 2 helical transmembrane spans lie at 25–45 (LVNH…AVEL) and 64–84 (LVQV…YFMS). An FAE domain is found at 81-370 (YFMSKPRTIY…FLTSLIGRKI (290 aa)). Residues C225, H304, H388, H392, H421, and N425 contribute to the active site.

This sequence belongs to the thiolase-like superfamily. Chalcone/stilbene synthases family. In terms of tissue distribution, in epidermal cells of aerial tissues and in the tapetum of anthers near maturity. Expressed in siliques, flowers and leaves.

The protein localises to the endoplasmic reticulum membrane. The enzyme catalyses a very-long-chain acyl-CoA + malonyl-CoA + H(+) = a very-long-chain 3-oxoacyl-CoA + CO2 + CoA. It functions in the pathway lipid metabolism; fatty acid biosynthesis. Its activity is regulated as follows. Strongly inhibited by metazachlor and mefluidide. Contributes to cuticular wax and suberin biosynthesis. Involved in both decarbonylation and acyl-reduction wax synthesis pathways. Required for elongation of C24 fatty acids, an essential step of the cuticular wax production. Major condensing enzyme for stem wax and pollen coat lipid biosynthesis. The chain is 3-ketoacyl-CoA synthase 6 from Arabidopsis thaliana (Mouse-ear cress).